Here is a 281-residue protein sequence, read N- to C-terminus: Glyoxalase 1 (281 aa).

2 consecutive VOC domains span residues 4-127 (RALH…IGKA) and 132-251 (KVLR…FVGD).

It belongs to the glyoxalase I family. As to expression, expressed in the following tissues in both larvae and adults: pharynx, pharyngeal-intestinal valve, intestine, anal sphincter, vulval muscle, seam cells and the nervous system.

In terms of biological role, thought to act as a glyoxalase. May remove methylglyoxal from mitochondrial proteins. Has roles in reducing oxidative stress and increasing lifespan. This is Glyoxalase 1 (glod-4) from Caenorhabditis elegans.